Here is a 170-residue protein sequence, read N- to C-terminus: Shikimate kinase (170 aa).

11-16 (LSGKST) is a binding site for ATP. A Mg(2+)-binding site is contributed by Ser15. Residues Asp33, Arg57, and Gly79 each contribute to the substrate site. Residue Arg119 coordinates ATP. Arg137 contributes to the substrate binding site.

This sequence belongs to the shikimate kinase family. In terms of assembly, monomer. Mg(2+) is required as a cofactor.

It localises to the cytoplasm. It carries out the reaction shikimate + ATP = 3-phosphoshikimate + ADP + H(+). Its pathway is metabolic intermediate biosynthesis; chorismate biosynthesis; chorismate from D-erythrose 4-phosphate and phosphoenolpyruvate: step 5/7. Catalyzes the specific phosphorylation of the 3-hydroxyl group of shikimic acid using ATP as a cosubstrate. This chain is Shikimate kinase, found in Clostridium botulinum (strain Kyoto / Type A2).